The following is a 458-amino-acid chain: Divalent metal cation transporter MntH (458 aa).

The next 11 membrane-spanning stretches (helical) occupy residues 38 to 58 (GFWKTLMAFMGPGALVAVGYM), 86 to 106 (LIAMLLQAMAARLGIVTGMDL), 119 to 139 (GIFLWIVTELAIMATDIAEII), 151 to 171 (IPLLWGVLITAFDVLLLLLLM), 180 to 200 (AIVATLVAVILFVFLYEVILA), 223 to 243 (MLFLALGIVGATVMPHNLYLH), 275 to 295 (LTIAFVVNCLLLILGAAMFYG), 315 to 335 (IVGSIASPMLSLLFAVALLAS), 370 to 390 (GLSILPVIIFTVYYHGNEAQV), 395 to 415 (IYSQVFLSIALPVSMIPLTLF), and 436 to 456 (WFVTIVLTLLNIYLILQTVGL).

It belongs to the NRAMP family.

It localises to the cell membrane. H(+)-stimulated, divalent metal cation uptake system. This chain is Divalent metal cation transporter MntH, found in Latilactobacillus sakei subsp. sakei (strain 23K) (Lactobacillus sakei subsp. sakei).